The sequence spans 299 residues: 4-hydroxy-tetrahydrodipicolinate synthase (299 aa).

Thr-45 is a binding site for pyruvate. Tyr-133 (proton donor/acceptor) is an active-site residue. Lys-161 (schiff-base intermediate with substrate) is an active-site residue. Pyruvate is bound at residue Ile-203.

This sequence belongs to the DapA family. As to quaternary structure, homotetramer; dimer of dimers.

The protein localises to the cytoplasm. The catalysed reaction is L-aspartate 4-semialdehyde + pyruvate = (2S,4S)-4-hydroxy-2,3,4,5-tetrahydrodipicolinate + H2O + H(+). Its pathway is amino-acid biosynthesis; L-lysine biosynthesis via DAP pathway; (S)-tetrahydrodipicolinate from L-aspartate: step 3/4. In terms of biological role, catalyzes the condensation of (S)-aspartate-beta-semialdehyde [(S)-ASA] and pyruvate to 4-hydroxy-tetrahydrodipicolinate (HTPA). The sequence is that of 4-hydroxy-tetrahydrodipicolinate synthase from Blochmanniella pennsylvanica (strain BPEN).